We begin with the raw amino-acid sequence, 93 residues long: Pyrimidine/purine nucleoside phosphorylase (93 aa).

This sequence belongs to the nucleoside phosphorylase PpnP family.

It carries out the reaction a purine D-ribonucleoside + phosphate = a purine nucleobase + alpha-D-ribose 1-phosphate. The catalysed reaction is adenosine + phosphate = alpha-D-ribose 1-phosphate + adenine. The enzyme catalyses cytidine + phosphate = cytosine + alpha-D-ribose 1-phosphate. It catalyses the reaction guanosine + phosphate = alpha-D-ribose 1-phosphate + guanine. It carries out the reaction inosine + phosphate = alpha-D-ribose 1-phosphate + hypoxanthine. The catalysed reaction is thymidine + phosphate = 2-deoxy-alpha-D-ribose 1-phosphate + thymine. The enzyme catalyses uridine + phosphate = alpha-D-ribose 1-phosphate + uracil. It catalyses the reaction xanthosine + phosphate = alpha-D-ribose 1-phosphate + xanthine. In terms of biological role, catalyzes the phosphorolysis of diverse nucleosides, yielding D-ribose 1-phosphate and the respective free bases. Can use uridine, adenosine, guanosine, cytidine, thymidine, inosine and xanthosine as substrates. Also catalyzes the reverse reactions. The protein is Pyrimidine/purine nucleoside phosphorylase of Shewanella halifaxensis (strain HAW-EB4).